A 72-amino-acid chain; its full sequence is Translation initiation factor IF-1 (72 aa).

The 72-residue stretch at 1–72 folds into the S1-like domain; sequence MSKSDYIELE…TKGRIIFRHK (72 aa).

Belongs to the IF-1 family. As to quaternary structure, component of the 30S ribosomal translation pre-initiation complex which assembles on the 30S ribosome in the order IF-2 and IF-3, IF-1 and N-formylmethionyl-tRNA(fMet); mRNA recruitment can occur at any time during PIC assembly.

The protein localises to the cytoplasm. In terms of biological role, one of the essential components for the initiation of protein synthesis. Stabilizes the binding of IF-2 and IF-3 on the 30S subunit to which N-formylmethionyl-tRNA(fMet) subsequently binds. Helps modulate mRNA selection, yielding the 30S pre-initiation complex (PIC). Upon addition of the 50S ribosomal subunit IF-1, IF-2 and IF-3 are released leaving the mature 70S translation initiation complex. This is Translation initiation factor IF-1 from Ruthia magnifica subsp. Calyptogena magnifica.